The following is a 431-amino-acid chain: D-inositol 3-phosphate glycosyltransferase (431 aa).

Histidine 21 provides a ligand contact to 1D-myo-inositol 3-phosphate. Residues 27 to 28 (QP) and glycine 35 each bind UDP-N-acetyl-alpha-D-glucosamine. 1D-myo-inositol 3-phosphate contacts are provided by residues 32 to 37 (DAGGMN), arginine 90, tyrosine 123, threonine 147, and arginine 167. UDP-N-acetyl-alpha-D-glucosamine is bound by residues arginine 241, lysine 246, and glutamine 307. Mg(2+) contacts are provided by tyrosine 316, arginine 317, and alanine 319. UDP-N-acetyl-alpha-D-glucosamine-binding residues include glutamate 329 and glutamate 337. Position 343 (threonine 343) interacts with Mg(2+).

The protein belongs to the glycosyltransferase group 1 family. MshA subfamily. Homodimer.

It carries out the reaction 1D-myo-inositol 3-phosphate + UDP-N-acetyl-alpha-D-glucosamine = 1D-myo-inositol 2-acetamido-2-deoxy-alpha-D-glucopyranoside 3-phosphate + UDP + H(+). Functionally, catalyzes the transfer of a N-acetyl-glucosamine moiety to 1D-myo-inositol 3-phosphate to produce 1D-myo-inositol 2-acetamido-2-deoxy-glucopyranoside 3-phosphate in the mycothiol biosynthesis pathway. This chain is D-inositol 3-phosphate glycosyltransferase, found in Saccharomonospora viridis (strain ATCC 15386 / DSM 43017 / JCM 3036 / CCUG 5913 / NBRC 12207 / NCIMB 9602 / P101) (Thermoactinomyces viridis).